The chain runs to 199 residues: GTP cyclohydrolase-2 (199 aa).

A GTP-binding site is contributed by 52–56 (RMHSE). Zn(2+)-binding residues include cysteine 57, cysteine 68, and cysteine 70. Residues glutamine 73, 94 to 96 (EGR), and threonine 116 contribute to the GTP site. Catalysis depends on aspartate 128, which acts as the Proton acceptor. The active-site Nucleophile is arginine 130. GTP is bound by residues threonine 151 and lysine 156.

The protein belongs to the GTP cyclohydrolase II family. Zn(2+) serves as cofactor.

The catalysed reaction is GTP + 4 H2O = 2,5-diamino-6-hydroxy-4-(5-phosphoribosylamino)-pyrimidine + formate + 2 phosphate + 3 H(+). The protein operates within cofactor biosynthesis; riboflavin biosynthesis; 5-amino-6-(D-ribitylamino)uracil from GTP: step 1/4. Functionally, catalyzes the conversion of GTP to 2,5-diamino-6-ribosylamino-4(3H)-pyrimidinone 5'-phosphate (DARP), formate and pyrophosphate. The protein is GTP cyclohydrolase-2 of Aliivibrio fischeri (strain MJ11) (Vibrio fischeri).